A 193-amino-acid polypeptide reads, in one-letter code: dCTP deaminase, dUMP-forming (193 aa).

DCTP contacts are provided by residues 101-106 (KSSLGR), aspartate 119, 127-129 (TLE), glutamine 148, tyrosine 162, and glutamine 174. Glutamate 129 (proton donor/acceptor) is an active-site residue.

This sequence belongs to the dCTP deaminase family. Homotrimer.

The enzyme catalyses dCTP + 2 H2O = dUMP + NH4(+) + diphosphate. It functions in the pathway pyrimidine metabolism; dUMP biosynthesis; dUMP from dCTP: step 1/1. Its function is as follows. Bifunctional enzyme that catalyzes both the deamination of dCTP to dUTP and the hydrolysis of dUTP to dUMP without releasing the toxic dUTP intermediate. The chain is dCTP deaminase, dUMP-forming from Bifidobacterium adolescentis (strain ATCC 15703 / DSM 20083 / NCTC 11814 / E194a).